We begin with the raw amino-acid sequence, 138 residues long: Transposon Tn10 TetD protein (138 aa).

Residues 31-129 enclose the HTH araC/xylS-type domain; it reads KDVLLWIEHN…KVTPSYYRRN (99 aa). 2 consecutive DNA-binding regions (H-T-H motif) follow at residues 48–69 and 96–119; these read DDVANKAGYTKWYFQRLFKKVT and ILEIALKYQFDSQQSFTRRFKYIF.

The protein is Transposon Tn10 TetD protein (tetD) of Escherichia coli.